The chain runs to 249 residues: Selenoprotein BthD (249 aa).

A disordered region spans residues 1–22 (MPPKRNKKAEAPIAERDAGEEL). The segment covering 8 to 19 (KAEAPIAERDAG) has biased composition (basic and acidic residues). The segment at residues 34–37 (CRSU) is a cross-link (cysteinyl-selenocysteine (Cys-Sec); redox-active). Position 37 (U37) is a non-standard amino acid, selenocysteine. Residues 122–249 (QQESKEQTNT…EATAGAKRRR (128 aa)) form a disordered region. Residue S147 is modified to Phosphoserine. Positions 175-198 (EQKSEEEPTQVDSKEAKQSKELVK) are enriched in basic and acidic residues. Positions 199–210 (TKRQPKAQKKQA) are enriched in basic residues.

As to expression, expressed in the developing salivary gland at late stages of embryogenesis. Also expressed in brain, neuroblast and wing disk.

Its subcellular location is the cytoplasm. The protein localises to the secreted. Functionally, may be involved in a redox-related process. Required for survival and specifically for salivary gland morphogenesis. The sequence is that of Selenoprotein BthD (BthD) from Drosophila melanogaster (Fruit fly).